The following is a 327-amino-acid chain: GPI-linked NAD(P)(+)--arginine ADP-ribosyltransferase 1 (327 aa).

A signal peptide spans 1-22 (MWVPAVANLLLLSLGLLEAIQA). 2 disulfide bridges follow: Cys53/Cys277 and Cys174/Cys224. A glycan (N-linked (GlcNAc...) asparagine) is linked at Asn65. The TR mART core domain occupies 73–273 (KVYADGWALA…IYLKALGKRS (201 aa)). NAD(+) contacts are provided by Tyr121 and Arg179. Catalysis depends on residues Arg179 and Ser202. Ser233 serves as a coordination point for NAD(+). The active site involves Glu240. Asn253 is a glycosylation site (N-linked (GlcNAc...) asparagine). Ser295 is lipidated: GPI-anchor amidated serine. A propeptide spans 296 to 327 (ASAQERLSTAWSLLLLLAFLAVGPFPGSPGLF) (removed in mature form).

Belongs to the Arg-specific ADP-ribosyltransferase family. As to expression, primarily in skeletal and cardiac muscle.

The protein localises to the sarcoplasmic reticulum membrane. The enzyme catalyses L-arginyl-[protein] + NAD(+) = N(omega)-(ADP-D-ribosyl)-L-arginyl-[protein] + nicotinamide + H(+). Has ADP-ribosyltransferase activity toward GLP1R. This Oryctolagus cuniculus (Rabbit) protein is GPI-linked NAD(P)(+)--arginine ADP-ribosyltransferase 1 (ART1).